Consider the following 446-residue polypeptide: Ribosomal protein uS12 methylthiotransferase RimO (446 aa).

Residues 7-118 (PKIAFAHLGC…IVEVIERVER (112 aa)) form the MTTase N-terminal domain. [4Fe-4S] cluster contacts are provided by cysteine 16, cysteine 52, cysteine 81, cysteine 156, cysteine 160, and cysteine 163. The region spanning 142–371 (TTPAPVAYLR…MELQQPIAQR (230 aa)) is the Radical SAM core domain. The 67-residue stretch at 374–440 (AAEVGKIVPV…IYDLYGIIPA (67 aa)) folds into the TRAM domain.

It belongs to the methylthiotransferase family. RimO subfamily. The cofactor is [4Fe-4S] cluster.

It localises to the cytoplasm. The catalysed reaction is L-aspartate(89)-[ribosomal protein uS12]-hydrogen + (sulfur carrier)-SH + AH2 + 2 S-adenosyl-L-methionine = 3-methylsulfanyl-L-aspartate(89)-[ribosomal protein uS12]-hydrogen + (sulfur carrier)-H + 5'-deoxyadenosine + L-methionine + A + S-adenosyl-L-homocysteine + 2 H(+). Functionally, catalyzes the methylthiolation of an aspartic acid residue of ribosomal protein uS12. The polypeptide is Ribosomal protein uS12 methylthiotransferase RimO (Thermosynechococcus vestitus (strain NIES-2133 / IAM M-273 / BP-1)).